A 202-amino-acid polypeptide reads, in one-letter code: Glycolipid transfer protein 1 (202 aa).

4 residues coordinate a ganglioside GM3 (d18:1(4E)): aspartate 52, asparagine 56, tryptophan 99, and histidine 138.

It belongs to the GLTP family.

May be involved in glycolipids transfer. The polypeptide is Glycolipid transfer protein 1 (Arabidopsis thaliana (Mouse-ear cress)).